A 141-amino-acid polypeptide reads, in one-letter code: Nucleoside diphosphate kinase (141 aa).

6 residues coordinate ATP: Lys9, Phe57, Arg85, Thr91, Arg102, and Asn112. His115 serves as the catalytic Pros-phosphohistidine intermediate.

Belongs to the NDK family. In terms of assembly, homotetramer. The cofactor is Mg(2+).

It localises to the cytoplasm. The catalysed reaction is a 2'-deoxyribonucleoside 5'-diphosphate + ATP = a 2'-deoxyribonucleoside 5'-triphosphate + ADP. The enzyme catalyses a ribonucleoside 5'-diphosphate + ATP = a ribonucleoside 5'-triphosphate + ADP. In terms of biological role, major role in the synthesis of nucleoside triphosphates other than ATP. The ATP gamma phosphate is transferred to the NDP beta phosphate via a ping-pong mechanism, using a phosphorylated active-site intermediate. This chain is Nucleoside diphosphate kinase, found in Chloroherpeton thalassium (strain ATCC 35110 / GB-78).